The chain runs to 243 residues: Uridylate kinase (243 aa).

15-18 (KLSG) lines the ATP pocket. Positions 23-28 (GEEGFG) are involved in allosteric activation by GTP. Glycine 57 serves as a coordination point for UMP. Glycine 58 and arginine 62 together coordinate ATP. UMP is bound by residues aspartate 77 and 138 to 145 (TGNPFFTT). ATP contacts are provided by threonine 165, phenylalanine 171, and aspartate 174.

Belongs to the UMP kinase family. Homohexamer.

It localises to the cytoplasm. The catalysed reaction is UMP + ATP = UDP + ADP. It participates in pyrimidine metabolism; CTP biosynthesis via de novo pathway; UDP from UMP (UMPK route): step 1/1. With respect to regulation, allosterically activated by GTP. Inhibited by UTP. Functionally, catalyzes the reversible phosphorylation of UMP to UDP. This chain is Uridylate kinase, found in Vibrio campbellii (strain ATCC BAA-1116).